A 1301-amino-acid polypeptide reads, in one-letter code: Tyrosine-protein phosphatase 99A (1301 aa).

The signal sequence occupies residues 1–28; sequence MPRPQHHALLRAMLKLLLFASIAEHCAT. The Extracellular segment spans residues 29 to 394; the sequence is ALPTNSSNSP…RQSHNDYNLA (366 aa). The segment at 31–63 is disordered; that stretch reads PTNSSNSPSSPSPFTVASLPPTTASSSSSPAVI. A glycan (N-linked (GlcNAc...) asparagine) is linked at asparagine 33. The span at 33 to 63 shows a compositional bias: low complexity; that stretch reads NSSNSPSSPSPFTVASLPPTTASSSSSPAVI. Fibronectin type-III domains lie at 66–165, 173–269, and 270–376; these read SSFD…YAAV, KPQN…TDVG, and GPSA…LQPN. N-linked (GlcNAc...) asparagine glycans are attached at residues asparagine 176, asparagine 212, asparagine 278, asparagine 322, and asparagine 336. The helical transmembrane segment at 395–415 threads the bilayer; sequence VLVGIIFSCFGIILIIMAFFL. Residues 416–1301 are Cytoplasmic-facing; that stretch reads WSRKCFHAAY…TDAQNLDIVG (886 aa). Tyrosine-protein phosphatase domains follow at residues 476-741 and 764-1016; these read FSRE…LVEA and LEQQ…LSFL. Catalysis depends on cysteine 682, which acts as the Phosphocysteine intermediate. The span at 1092–1106 shows a compositional bias: polar residues; sequence TALNETVSTPSTDTN. Disordered regions lie at residues 1092 to 1199 and 1257 to 1281; these read TALN…PTIP and VGDL…NNHI. Over residues 1107-1130 the composition is skewed to low complexity; that stretch reads PSLLPILSLLPPTVAPLSSSSSTT. Residues 1131–1142 show a composition bias toward pro residues; sequence PPTPSTPTPQPP. A compositionally biased stretch (polar residues) spans 1150-1161; sequence HSPSDLSHQISS. A compositionally biased stretch (low complexity) spans 1162-1188; it reads TVANAASPVTPATASASAGATPTTPMT. Polar residues predominate over residues 1264 to 1273; it reads NADNSPTASP.

The protein belongs to the protein-tyrosine phosphatase family. Receptor class subfamily. In terms of tissue distribution, selectively expressed in a subset of axons and pioneer neurons (including aCC and RP2) in the embryo.

It is found in the membrane. The enzyme catalyses O-phospho-L-tyrosyl-[protein] + H2O = L-tyrosyl-[protein] + phosphate. May play a key role in signal transduction and growth control. May have a role in the establishment of the intersegmental and segmental nerves. The chain is Tyrosine-protein phosphatase 99A (Ptp99A) from Drosophila melanogaster (Fruit fly).